We begin with the raw amino-acid sequence, 207 residues long: Thiamine-phosphate synthase (207 aa).

4-amino-2-methyl-5-(diphosphooxymethyl)pyrimidine is bound by residues 37 to 41 (QYRHK) and Asn69. Positions 70 and 89 each coordinate Mg(2+). Positions 108 and 138 each coordinate 4-amino-2-methyl-5-(diphosphooxymethyl)pyrimidine. Residues Gly165 and 185-186 (IS) each bind 2-[(2R,5Z)-2-carboxy-4-methylthiazol-5(2H)-ylidene]ethyl phosphate.

It belongs to the thiamine-phosphate synthase family. Mg(2+) is required as a cofactor.

The enzyme catalyses 2-[(2R,5Z)-2-carboxy-4-methylthiazol-5(2H)-ylidene]ethyl phosphate + 4-amino-2-methyl-5-(diphosphooxymethyl)pyrimidine + 2 H(+) = thiamine phosphate + CO2 + diphosphate. The catalysed reaction is 2-(2-carboxy-4-methylthiazol-5-yl)ethyl phosphate + 4-amino-2-methyl-5-(diphosphooxymethyl)pyrimidine + 2 H(+) = thiamine phosphate + CO2 + diphosphate. It catalyses the reaction 4-methyl-5-(2-phosphooxyethyl)-thiazole + 4-amino-2-methyl-5-(diphosphooxymethyl)pyrimidine + H(+) = thiamine phosphate + diphosphate. Its pathway is cofactor biosynthesis; thiamine diphosphate biosynthesis; thiamine phosphate from 4-amino-2-methyl-5-diphosphomethylpyrimidine and 4-methyl-5-(2-phosphoethyl)-thiazole: step 1/1. In terms of biological role, condenses 4-methyl-5-(beta-hydroxyethyl)thiazole monophosphate (THZ-P) and 2-methyl-4-amino-5-hydroxymethyl pyrimidine pyrophosphate (HMP-PP) to form thiamine monophosphate (TMP). This chain is Thiamine-phosphate synthase, found in Janthinobacterium sp. (strain Marseille) (Minibacterium massiliensis).